The sequence spans 295 residues: Nucleotide-binding protein YvcJ (295 aa).

16–23 serves as a coordination point for ATP; that stretch reads GMSGAGKT. 67–70 provides a ligand contact to GTP; the sequence is DLRG.

The protein belongs to the RapZ-like family.

Its function is as follows. Displays ATPase and GTPase activities. Can also hydrolyze pNPP. May affect the expression of competence via the phosphorylation of a cellular component. The protein is Nucleotide-binding protein YvcJ (yvcJ) of Bacillus subtilis (strain 168).